The chain runs to 345 residues: Phosphate acyltransferase (345 aa).

The protein belongs to the PlsX family. Homodimer. Probably interacts with PlsY.

The protein localises to the cytoplasm. The enzyme catalyses a fatty acyl-[ACP] + phosphate = an acyl phosphate + holo-[ACP]. The protein operates within lipid metabolism; phospholipid metabolism. Its function is as follows. Catalyzes the reversible formation of acyl-phosphate (acyl-PO(4)) from acyl-[acyl-carrier-protein] (acyl-ACP). This enzyme utilizes acyl-ACP as fatty acyl donor, but not acyl-CoA. The sequence is that of Phosphate acyltransferase from Dichelobacter nodosus (strain VCS1703A).